Reading from the N-terminus, the 88-residue chain is Small ribosomal subunit protein bS20 (88 aa).

The tract at residues 1 to 22 (MANTPSAKKAVNKIAKRTQVNK) is disordered.

The protein belongs to the bacterial ribosomal protein bS20 family.

Functionally, binds directly to 16S ribosomal RNA. The chain is Small ribosomal subunit protein bS20 from Bartonella bacilliformis (strain ATCC 35685 / KC583 / Herrer 020/F12,63).